The following is a 264-amino-acid chain: TLC domain-containing protein 4-B (264 aa).

6 helical membrane passes run 6–26 (VYVV…VSPV), 50–70 (LVST…LWYD), 84–104 (LVKL…LLLA), 110–130 (MGDV…GYVL), 169–189 (LVVA…IAVM), and 210–230 (LAIQ…NIIW). Residues 41 to 243 (NKLNDWNSRL…IARGCYKVIT (203 aa)) enclose the TLC domain.

The protein belongs to the TLCD4 family.

The protein resides in the membrane. The polypeptide is TLC domain-containing protein 4-B (tlcd4b) (Danio rerio (Zebrafish)).